Here is a 464-residue protein sequence, read N- to C-terminus: MNSFSPTEDTIAAIATAVSPGQGSIAAIRISGSSAIETSKNIVDVPGIQDWSTHKVLYGHVTEENRKKYIDEVLILVMKGPRSFTGEDVVEIHCHGGIIPVQKILERILAFPSVRRAEPGEFSQRAVLNGRLSLTQAESISELVSARSRKAAELAINGIEGNIQTTIQSIRKRLIEQLTEIEARIDFEEDLPLLDEKHVKNEIVAIKKDLNELIDNAKRGSWVRSGLKVALAGKPNVGKSSLMNRLSKQEKAIVTDLPGTTRDILESEIVLEGIPVTFIDTAGLRDTKDIIEKIGISRTKKTLIHADLIILIFDYSSGWTNEDESILKQLPVNIPLLIVGNKSDLMNDQSFEKVPKYILKKENLVILSAKTGNGEDDLINYLLKKCGSSQTHGLDIALNERQLDLAKSTTESLENINKVFDEKLPWDFWTIDLRQAINYLGELTGEDLTENLLDNIFSKFCIGK.

3 residues coordinate (6S)-5-formyl-5,6,7,8-tetrahydrofolate: Arg29, Glu91, and Arg131. The TrmE-type G domain maps to 226-387 (GLKVALAGKP…LINYLLKKCG (162 aa)). Asn236 is a K(+) binding site. Residues 236–241 (NVGKSS), 255–261 (TDLPGTT), and 280–283 (DTAG) each bind GTP. Ser240 lines the Mg(2+) pocket. Thr255, Leu257, and Thr260 together coordinate K(+). Thr261 is a Mg(2+) binding site. Lys464 lines the (6S)-5-formyl-5,6,7,8-tetrahydrofolate pocket.

The protein belongs to the TRAFAC class TrmE-Era-EngA-EngB-Septin-like GTPase superfamily. TrmE GTPase family. In terms of assembly, homodimer. Heterotetramer of two MnmE and two MnmG subunits. The cofactor is K(+).

The protein resides in the cytoplasm. Functionally, exhibits a very high intrinsic GTPase hydrolysis rate. Involved in the addition of a carboxymethylaminomethyl (cmnm) group at the wobble position (U34) of certain tRNAs, forming tRNA-cmnm(5)s(2)U34. This is tRNA modification GTPase MnmE from Prochlorococcus marinus (strain NATL1A).